We begin with the raw amino-acid sequence, 97 residues long: uncharacterized protein (97 aa).

3 helical membrane passes run 7-27 (CIAP…IGLG), 34-54 (IPML…LMFS), and 69-89 (IVLY…PTIL).

It localises to the cell membrane. This is an uncharacterized protein from Haemophilus influenzae (strain ATCC 51907 / DSM 11121 / KW20 / Rd).